A 553-amino-acid polypeptide reads, in one-letter code: Putative transport protein YidE (553 aa).

5 helical membrane passes run 4 to 24, 28 to 48, 65 to 85, 95 to 115, and 158 to 178; these read IALTVSILALVAVVGLFIGNV, GVGLGIGGVLFGGIIVGHFVS, FGLILFVYTIGIQVGPGFFAS, LFAVLIVIIGGLVTAILHKLF, and MSYAMAYPFGICGILFTMWML. RCK C-terminal domains are found at residues 191–276 and 279–361; these read QQHE…VIGQ and DTSL…VLGN. 6 helical membrane-spanning segments follow: residues 371-391, 393-413, 439-459, 464-484, 493-513, and 533-553; these read MLPVFIGIGLGVLLGSIPVFV, GFPAALKLGLAGGPLIMALIL, IVLFLSVVGLKSGGDFIHTLV, LSWIGYGALITAVPLITVGIL, YLTMCGMLAGSMTDPPALAFA, and LVMFLRIITPQLLAVLFWSIG.

This sequence belongs to the AAE transporter (TC 2.A.81) family. YidE subfamily.

The protein resides in the cell membrane. This chain is Putative transport protein YidE, found in Escherichia coli O127:H6 (strain E2348/69 / EPEC).